The primary structure comprises 163 residues: NADH-quinone oxidoreductase subunit I (163 aa).

4Fe-4S ferredoxin-type domains are found at residues Leu53–Gly83 and Val94–Asn123. Positions 63, 66, 69, 73, 103, 106, 109, and 113 each coordinate [4Fe-4S] cluster.

It belongs to the complex I 23 kDa subunit family. In terms of assembly, NDH-1 is composed of 14 different subunits. Subunits NuoA, H, J, K, L, M, N constitute the membrane sector of the complex. The cofactor is [4Fe-4S] cluster.

The protein resides in the cell inner membrane. It catalyses the reaction a quinone + NADH + 5 H(+)(in) = a quinol + NAD(+) + 4 H(+)(out). Functionally, NDH-1 shuttles electrons from NADH, via FMN and iron-sulfur (Fe-S) centers, to quinones in the respiratory chain. The immediate electron acceptor for the enzyme in this species is believed to be ubiquinone. Couples the redox reaction to proton translocation (for every two electrons transferred, four hydrogen ions are translocated across the cytoplasmic membrane), and thus conserves the redox energy in a proton gradient. The chain is NADH-quinone oxidoreductase subunit I from Bartonella henselae (strain ATCC 49882 / DSM 28221 / CCUG 30454 / Houston 1) (Rochalimaea henselae).